Here is a 188-residue protein sequence, read N- to C-terminus: Pro-FMRFamide-related neuropeptide VF (188 aa).

The first 26 residues, M1–C26, serve as a signal peptide directing secretion. The propeptide occupies T27–R57. F94 is subject to Phenylalanine amide. The propeptide occupies T97–A106. Disordered regions lie at residues S116–L144 and I163–K188. Position 125 is a phenylalanine amide (F125). Residues T128–K188 constitute a propeptide that is removed on maturation.

Belongs to the FARP (FMRFamide related peptide) family.

It is found in the secreted. In terms of biological role, efficiently inhibits forskolin-induced production of cAMP. Acts as a potent negative regulator of gonadotropin synthesis and secretion. Induces secretion of prolactin. Its function is as follows. Efficiently inhibits forskolin-induced production of cAMP. Blocks morphine-induced analgesia. This is Pro-FMRFamide-related neuropeptide VF (Npvf) from Mus musculus (Mouse).